The chain runs to 390 residues: MKFIDESLIRIEAGDGGNGCVSFRREKFIPKGGPDGGDGGDGGDVYLQADENLNTLIDYRFNKRFAAERGENGRSSDCTGRRGKDIILPVPVGTRAIDNDTKETLGDLTQHGQKMLVAKGGYHGLGNTRFKSSVNRAPRQKTMGTPGEKRDLLLELMLLADVGMLGLPNAGKSTFIRAVSAAKPKVADYPFTTLVPSLGVVKVDDSHSFVVADIPGLIEGAADGAGLGIRFLKHLERCRVLIHLVDIAPIDGSNPADNVAIIESELFQYSEKLSEKPRWLVFNKIDTMSDEEAEERVREITEQLGWEEDYYLISAATRKNVPPLCRDIMDFIIANPREAETQQVAPEEVKFKWEDYHQEQLAGYQFDDDEDWDDDWTEEDDEGIEFIYKP.

Positions M1 to L159 constitute an Obg domain. The OBG-type G domain maps to A160–I333. Residues G166–S173, F191–V195, D213–G216, N283–D286, and S314–A316 each bind GTP. Residues S173 and T193 each coordinate Mg(2+).

It belongs to the TRAFAC class OBG-HflX-like GTPase superfamily. OBG GTPase family. As to quaternary structure, monomer. Requires Mg(2+) as cofactor.

Its subcellular location is the cytoplasm. Its function is as follows. An essential GTPase which binds GTP, GDP and possibly (p)ppGpp with moderate affinity, with high nucleotide exchange rates and a fairly low GTP hydrolysis rate. Plays a role in control of the cell cycle, stress response, ribosome biogenesis and in those bacteria that undergo differentiation, in morphogenesis control. This chain is GTPase Obg, found in Haemophilus influenzae (strain 86-028NP).